The sequence spans 143 residues: Transcriptional regulator MraZ (143 aa).

SpoVT-AbrB domains are found at residues 5–47 and 76–119; these read SHTP…PLAE and ASDD…DSQR.

This sequence belongs to the MraZ family. As to quaternary structure, forms oligomers.

The protein localises to the cytoplasm. The protein resides in the nucleoid. The sequence is that of Transcriptional regulator MraZ from Parafrankia sp. (strain EAN1pec).